Reading from the N-terminus, the 394-residue chain is Methionine import ATP-binding protein MetN 2 (394 aa).

An ABC transporter domain is found at 39–278 (VSLEQVGKVF…PRHGATRALL (240 aa)). 75–82 (GRSGAGKS) serves as a coordination point for ATP.

Belongs to the ABC transporter superfamily. Methionine importer (TC 3.A.1.24) family. As to quaternary structure, the complex is composed of two ATP-binding proteins (MetN), two transmembrane proteins (MetI) and a solute-binding protein (MetQ).

It is found in the cell inner membrane. The enzyme catalyses L-methionine(out) + ATP + H2O = L-methionine(in) + ADP + phosphate + H(+). The catalysed reaction is D-methionine(out) + ATP + H2O = D-methionine(in) + ADP + phosphate + H(+). Part of the ABC transporter complex MetNIQ involved in methionine import. Responsible for energy coupling to the transport system. The protein is Methionine import ATP-binding protein MetN 2 of Burkholderia cenocepacia (strain HI2424).